The sequence spans 302 residues: Capsid protein (302 aa).

The segment at 217–302 is disordered; the sequence is FHSGDAAKQS…HSSPQQTPKK (86 aa). Low complexity predominate over residues 254–271; that stretch reads PRAGTPSSQKSGQSGQTT. Over residues 288–302 the composition is skewed to polar residues; the sequence is HKSTPHSSPQQTPKK.

The protein localises to the virion. Capsid protein self-assembles to form a flexuous, filamentous capsid (Potential). The capsid encapsulates the single-stranded RNA genome. This is Capsid protein from Botryotinia fuckeliana (Noble rot fungus).